We begin with the raw amino-acid sequence, 333 residues long: MVREKVRVSTRTLQWKCVESRIDSKRLYYGRFILSPLMKGQADTIGIAMRRILLGEMEGTCITRAKSEKISHEYSTIVGIQEPVHEILMNLKEIVLKSNLYGIRDASICFKGPGYVTAQNIILPPSVVIVDNTQHIANVTEPIQLCIGLQIERDRGYRINTLKNFQDGSYNIDAIFMPVRNANHSIHSYVNGNEKQEILFLEIWTNGSLTPKEALYEASRNLIDLFIPFLHAEEEKLNFENNEHKVTLPLFTCHDLLAKTKLKKKKKEIAFKSIFIDQLELPPKIYNCLKKSNIHTLLELLTKSKEDLMKIEHFRVEDVKHILDILEIEKHFP.

An alpha N-terminal domain (alpha-NTD) region spans residues 1–233 (MVREKVRVST…DLFIPFLHAE (233 aa)). Residues 266-333 (KKEIAFKSIF…DILEIEKHFP (68 aa)) are alpha C-terminal domain (alpha-CTD).

This sequence belongs to the RNA polymerase alpha chain family. As to quaternary structure, in plastids the minimal PEP RNA polymerase catalytic core is composed of four subunits: alpha, beta, beta', and beta''. When a (nuclear-encoded) sigma factor is associated with the core the holoenzyme is formed, which can initiate transcription.

The protein localises to the plastid. It is found in the chloroplast. The catalysed reaction is RNA(n) + a ribonucleoside 5'-triphosphate = RNA(n+1) + diphosphate. Its function is as follows. DNA-dependent RNA polymerase catalyzes the transcription of DNA into RNA using the four ribonucleoside triphosphates as substrates. The polypeptide is DNA-directed RNA polymerase subunit alpha (Lotus japonicus (Lotus corniculatus var. japonicus)).